The following is a 281-amino-acid chain: MININGEIKVDNAAPFVLFGGINVLESRDLAMRSCEEYVRVTGKLGIPYVFKASFDKANRSSIHSYRGPGLEEGLRIFEDVKKTFGVPLITDVHEPYQAKIAAEVIDVLQLPAFLARQTDLVVALAQTGRVINIKKPQFLSPPQMLNIVEKFREAGNDKLILCDRGTCFGYDNLVVDMLGFGVMKKVTGNLPIIFDVTHALQQRDSLGTASGGRREQVADLARAGMGVGLAGLFLEAHPDPKVAKCDGPSALPLDKLEPFLAQLKQLDDLVKSFAPLDIEA.

This sequence belongs to the KdsA family.

It localises to the cytoplasm. The catalysed reaction is D-arabinose 5-phosphate + phosphoenolpyruvate + H2O = 3-deoxy-alpha-D-manno-2-octulosonate-8-phosphate + phosphate. It participates in carbohydrate biosynthesis; 3-deoxy-D-manno-octulosonate biosynthesis; 3-deoxy-D-manno-octulosonate from D-ribulose 5-phosphate: step 2/3. It functions in the pathway bacterial outer membrane biogenesis; lipopolysaccharide biosynthesis. This chain is 2-dehydro-3-deoxyphosphooctonate aldolase, found in Janthinobacterium sp. (strain Marseille) (Minibacterium massiliensis).